Consider the following 148-residue polypeptide: 1,4-dihydroxy-2-naphthoyl-CoA hydrolase (148 aa).

The active site involves Asp15.

Belongs to the 4-hydroxybenzoyl-CoA thioesterase family. DHNA-CoA hydrolase subfamily.

The enzyme catalyses 1,4-dihydroxy-2-naphthoyl-CoA + H2O = 1,4-dihydroxy-2-naphthoate + CoA + H(+). It participates in cofactor biosynthesis; phylloquinone biosynthesis. Its pathway is quinol/quinone metabolism; 1,4-dihydroxy-2-naphthoate biosynthesis; 1,4-dihydroxy-2-naphthoate from chorismate: step 7/7. Catalyzes the hydrolysis of 1,4-dihydroxy-2-naphthoyl-CoA (DHNA-CoA) to 1,4-dihydroxy-2-naphthoate (DHNA), a reaction involved in phylloquinone (vitamin K1) biosynthesis. The chain is 1,4-dihydroxy-2-naphthoyl-CoA hydrolase from Nostoc punctiforme (strain ATCC 29133 / PCC 73102).